The primary structure comprises 302 residues: Sulfate adenylyltransferase subunit 2 (302 aa).

This sequence belongs to the PAPS reductase family. CysD subfamily. In terms of assembly, heterodimer composed of CysD, the smaller subunit, and CysN.

It catalyses the reaction sulfate + ATP + H(+) = adenosine 5'-phosphosulfate + diphosphate. The protein operates within sulfur metabolism; hydrogen sulfide biosynthesis; sulfite from sulfate: step 1/3. Its function is as follows. With CysN forms the ATP sulfurylase (ATPS) that catalyzes the adenylation of sulfate producing adenosine 5'-phosphosulfate (APS) and diphosphate, the first enzymatic step in sulfur assimilation pathway. APS synthesis involves the formation of a high-energy phosphoric-sulfuric acid anhydride bond driven by GTP hydrolysis by CysN coupled to ATP hydrolysis by CysD. This is Sulfate adenylyltransferase subunit 2 from Escherichia coli O1:K1 / APEC.